The chain runs to 71 residues: Antimicrobial peptide VpCT4 (71 aa).

Positions 1-23 (MKTQFVILIVAIVILQLISQSEA) are cleaved as a signal peptide. Leucine 39 bears the Leucine amide mark. A propeptide spanning residues 40–71 (GKRGVQNMDQFDDIFEPELSEADLRYLQDLLR) is cleaved from the precursor.

Belongs to the non-disulfide-bridged peptide (NDBP) superfamily. Short antimicrobial peptide (group 4) family. In terms of tissue distribution, expressed by the venom gland.

Its subcellular location is the secreted. The protein resides in the target cell membrane. Functionally, antimicrobial peptide with potent activity against bacteria S.aureus (MIC=9.3 uM), weak activity against E.coli (MIC&gt;100 uM), and weak activity against pathogenic yeasts C.albicans (MIC=100 uM) and C.glabrata (MIC=100 uM). Is not very effective against P.aeruginosa (MIC&gt;300 uM). Also provokes high hemolysis on human erythrocytes (HC(50)=4.8 uM). The sequence is that of Antimicrobial peptide VpCT4 from Mesomexovis punctatus (Scorpion).